Reading from the N-terminus, the 325-residue chain is MTRYSRITGTGSYLPPHRVTNDDLVAQLAQQGIETSDEWIVERTGIRARHFADRDVTSSDLALEASRRALEAAGCQAQDLDLIIVATSTPDMVFPSTACILQNKLGANGCPAFDVQAVCSGFVYALTVADAMIRSGGARRALVVGSEVFSRILDFNDRTTCVLFGDGAGAVVLEASEAPGILASDLHADGSHVGILCVPGNVYGGQILGDPLLKMDGQAVFKLAVGVLEKAARATLDKAGMTDADIDWLIPHQANIRIMQSTARKLKLSMDKVVVTVDQHGNTSAASIPLALDHGVRNGQVQPGQTVLLEGVGGGFTWGAVLLKM.

Active-site residues include cysteine 119 and histidine 252. Residues 253 to 257 (QANIR) are ACP-binding. Asparagine 282 is an active-site residue.

This sequence belongs to the thiolase-like superfamily. FabH family. Homodimer.

It localises to the cytoplasm. The enzyme catalyses malonyl-[ACP] + acetyl-CoA + H(+) = 3-oxobutanoyl-[ACP] + CO2 + CoA. It participates in lipid metabolism; fatty acid biosynthesis. Functionally, catalyzes the condensation reaction of fatty acid synthesis by the addition to an acyl acceptor of two carbons from malonyl-ACP. Catalyzes the first condensation reaction which initiates fatty acid synthesis and may therefore play a role in governing the total rate of fatty acid production. Possesses both acetoacetyl-ACP synthase and acetyl transacylase activities. Its substrate specificity determines the biosynthesis of branched-chain and/or straight-chain of fatty acids. The chain is Beta-ketoacyl-[acyl-carrier-protein] synthase III from Acidovorax ebreus (strain TPSY) (Diaphorobacter sp. (strain TPSY)).